Here is a 90-residue protein sequence, read N- to C-terminus: Large ribosomal subunit protein bL27 (90 aa).

Positions 1–20 (MAHKKAGGSSRNGRDSAGKR) are disordered.

Belongs to the bacterial ribosomal protein bL27 family.

The polypeptide is Large ribosomal subunit protein bL27 (Rhodopseudomonas palustris (strain ATCC BAA-98 / CGA009)).